The primary structure comprises 238 residues: Cysteine-rich venom protein pseudecin (238 aa).

Residues 1–19 (MIAFIVLLSLAAVLQQSSG) form the signal peptide. Residues 20-28 (TVDFASESS) constitute a propeptide that is removed on maturation. The SCP domain occupies 38 to 164 (VDKHNALRRS…SSKYLYVCQY (127 aa)). Zn(2+) contacts are provided by threonine 51 and serine 106. 8 disulfide bridges follow: cysteine 75/cysteine 153, cysteine 92/cysteine 165, cysteine 148/cysteine 162, cysteine 184/cysteine 191, cysteine 187/cysteine 196, cysteine 200/cysteine 233, cysteine 209/cysteine 227, and cysteine 218/cysteine 231. The ShKT domain maps to 200 to 233 (CNYNNDFSNCKSLAKKSKCQTEWIKKKCPASCFC).

As to expression, expressed by the venom gland.

Its subcellular location is the secreted. Blocks olfactory (CNGA2) and retinal (CNGA1) CNG channel currents. Is really less potent that Pseudechetoxin. Does not affect neither depolarization- nor caffeine-induced contraction of smooth muscle. This chain is Cysteine-rich venom protein pseudecin, found in Pseudechis porphyriacus (Red-bellied black snake).